We begin with the raw amino-acid sequence, 57 residues long: Large ribosomal subunit protein bL32 (57 aa).

A compositionally biased stretch (basic residues) spans methionine 1 to glutamine 19. Residues methionine 1–alanine 22 are disordered.

The protein belongs to the bacterial ribosomal protein bL32 family.

This Mycobacterium tuberculosis (strain ATCC 25177 / H37Ra) protein is Large ribosomal subunit protein bL32.